We begin with the raw amino-acid sequence, 350 residues long: MTKSYSEESMMLESQSSSNWTDKCHSSSQDERDVDKTSEPMLNDMEDDDDAGLNRLEDEDDEEEEEEEEDGDDTKPKRRGPKKKKMTKARMQRFKMRRMKANARERNRMHGLNDALESLRKVVPCYSKTQKLSKIETLRLAKNYIWALSEILRSGKSPDLMSFVQALCKGLSQPTTNLVAGCLQLNPRTFLPEQSQEMPPHMQTASASFSALPYSYQTPGLPSPPYGTMDSSHIFHVKPHAYGSALEPFFDTTLTDCTSPSFDGPLSPPLSVNGNFSFKHEPSSEFEKNYAFTMHYQAAGLAGAQGHAASLYAGSTQRCDIPMENIMSYDGHSHHERVMNAQLNAIFHDS.

The interval 1–91 (MTKSYSEESM…KKKKMTKARM (91 aa)) is disordered. The segment covering 7 to 18 (EESMMLESQSSS) has biased composition (low complexity). Basic and acidic residues predominate over residues 22–38 (DKCHSSSQDERDVDKTS). Acidic residues predominate over residues 44-72 (DMEDDDDAGLNRLEDEDDEEEEEEEEDGD). Positions 76 to 91 (PKRRGPKKKKMTKARM) are enriched in basic residues. Positions 82–88 (KKKKMTK) match the Nuclear localization signal motif. In terms of domain architecture, bHLH spans 96-148 (MRRMKANARERNRMHGLNDALESLRKVVPCYSKTQKLSKIETLRLAKNYIWAL).

As to quaternary structure, efficient DNA binding requires dimerization with another bHLH protein. In the embryo, expressed broadly in a subset of primary neurons in the brain and spinal cord. At 28 hours post-fertilization (hpf), regions of expression include telencephalon, olfactory placode, epiphysis, cranial ganglia, acoustic ganglia, Rohon-Beard mechano-sensory neurons and motoneurons. In 2 day postembryonic brain, expressed in many brain regions but absent from subpallium, the ventral preoptic region, ventral thalamus and hypothalamus; sites of expression extend laterally from the ventricular proliferative regions and correspond to freshly determined cell populations. In adult, expressed in all tissues examined with highest levels in brain.

The protein localises to the cytoplasm. Its subcellular location is the nucleus. May act as a transcriptional activator. Differentiation factor required for neurogenesis. Acts as an upstream activator of isl1. In Danio rerio (Zebrafish), this protein is Neurogenic differentiation factor 1.